Here is a 537-residue protein sequence, read N- to C-terminus: 2-succinyl-5-enolpyruvyl-6-hydroxy-3-cyclohexene-1-carboxylate synthase (537 aa).

Belongs to the TPP enzyme family. MenD subfamily. As to quaternary structure, homodimer. It depends on Mg(2+) as a cofactor. Requires Mn(2+) as cofactor. Thiamine diphosphate is required as a cofactor.

The catalysed reaction is isochorismate + 2-oxoglutarate + H(+) = 5-enolpyruvoyl-6-hydroxy-2-succinyl-cyclohex-3-ene-1-carboxylate + CO2. The protein operates within quinol/quinone metabolism; 1,4-dihydroxy-2-naphthoate biosynthesis; 1,4-dihydroxy-2-naphthoate from chorismate: step 2/7. It participates in quinol/quinone metabolism; menaquinone biosynthesis. Catalyzes the thiamine diphosphate-dependent decarboxylation of 2-oxoglutarate and the subsequent addition of the resulting succinic semialdehyde-thiamine pyrophosphate anion to isochorismate to yield 2-succinyl-5-enolpyruvyl-6-hydroxy-3-cyclohexene-1-carboxylate (SEPHCHC). In Dechloromonas aromatica (strain RCB), this protein is 2-succinyl-5-enolpyruvyl-6-hydroxy-3-cyclohexene-1-carboxylate synthase.